A 331-amino-acid polypeptide reads, in one-letter code: MSTKEKLISHVMKEEPVGSRSKVTVVGVGMVGMASAISILLKDLCDELAMVDVMEDKLKGEVMDLQHGSLFLKTKIVGDKDYSVTANSKVVVVTAGARQQEGESRLNLVQRNVNIFKFIIPNIVKYSPNCILMVVSNPVDILTYVAWKLSGFPRHRVIGSGTNLDSARFRHLIGEKLHLHPSSCHAWIVGEHGDSSVPVWSGVNVAGVSLQGLNPQMGTEGDGENWKAIHKEVVDGAYEVIKLKGYTSWAIGMSVADLVESIIKNMHKVHPVSTLVQGMHGVKDEVFLSVPCVLGNSGLTDVIHMTLKAEEEKQLQKSAETLWGVQKELTL.

NAD(+) contacts are provided by residues 29–57 (GMVGMASAISILLKDLCDELAMVDVMEDK) and Arg98. Substrate contacts are provided by Arg105, Asn137, and Arg168. Residue Asn137 coordinates NAD(+). His192 serves as the catalytic Proton acceptor. Position 247 (Thr247) interacts with substrate.

This sequence belongs to the LDH/MDH superfamily. LDH family. Homotetramer.

It is found in the cytoplasm. The enzyme catalyses (S)-lactate + NAD(+) = pyruvate + NADH + H(+). It functions in the pathway fermentation; pyruvate fermentation to lactate; (S)-lactate from pyruvate: step 1/1. In terms of biological role, interconverts simultaneously and stereospecifically pyruvate and lactate with concomitant interconversion of NADH and NAD(+). The protein is L-lactate dehydrogenase A chain (ldha) of Champsocephalus gunnari (Mackerel icefish).